The primary structure comprises 146 residues: Hemoglobin subunit beta (146 aa).

The residue at position 1 (Val1) is an N-acetylvaline. One can recognise a Globin domain in the interval 2–146 (HLTGEEKSAV…VANALAHKYH (145 aa)). Phosphothreonine is present on Thr12. The residue at position 44 (Ser44) is a Phosphoserine. Residue Lys59 is modified to N6-acetyllysine. His63 contributes to the heme b binding site. An N6-acetyllysine modification is found at Lys82. Position 92 (His92) interacts with heme b. Position 93 is an S-nitrosocysteine (Cys93). An N6-acetyllysine modification is found at Lys144.

Belongs to the globin family. Heterotetramer of two alpha chains and two beta chains. As to expression, red blood cells.

Its function is as follows. Involved in oxygen transport from the lung to the various peripheral tissues. The chain is Hemoglobin subunit beta (HBB) from Nycticebus coucang (Slow loris).